The sequence spans 349 residues: Guanine nucleotide-binding protein-like alpha-10 subunit (349 aa).

Residues 33–349 (EEIRVLIYGQ…LNITYNSVKN (317 aa)) enclose the G-alpha domain. Residues 36-49 (RVLIYGQKKVGVTT) are G1 motif. The tract at residues 168-176 (DLNFIKLTQ) is G2 motif. The G3 motif stretch occupies residues 191 to 200 (IKMIEMGIQT). Residues 195 to 199 (EMGIQ) and 266 to 269 (NKKD) each bind GTP. The G4 motif stretch occupies residues 262–269 (IVFFNKKD). A G5 motif region spans residues 320–325 (NEESEV).

Belongs to the G-alpha family.

This Dictyostelium discoideum (Social amoeba) protein is Guanine nucleotide-binding protein-like alpha-10 subunit (gpaJ).